The following is a 302-amino-acid chain: 4-diphosphocytidyl-2-C-methyl-D-erythritol kinase (302 aa).

Lys-27 is an active-site residue. 110 to 120 (PMGGGVGGGSS) is an ATP binding site. Asp-152 is a catalytic residue.

The protein belongs to the GHMP kinase family. IspE subfamily.

It carries out the reaction 4-CDP-2-C-methyl-D-erythritol + ATP = 4-CDP-2-C-methyl-D-erythritol 2-phosphate + ADP + H(+). The protein operates within isoprenoid biosynthesis; isopentenyl diphosphate biosynthesis via DXP pathway; isopentenyl diphosphate from 1-deoxy-D-xylulose 5-phosphate: step 3/6. Catalyzes the phosphorylation of the position 2 hydroxy group of 4-diphosphocytidyl-2C-methyl-D-erythritol. This Mannheimia succiniciproducens (strain KCTC 0769BP / MBEL55E) protein is 4-diphosphocytidyl-2-C-methyl-D-erythritol kinase.